We begin with the raw amino-acid sequence, 240 residues long: ATP-dependent dethiobiotin synthetase BioD (240 aa).

Residue 13–18 (EVGKTV) participates in ATP binding. Thr17 provides a ligand contact to Mg(2+). The active site involves Lys38. Position 42 (Ser42) interacts with substrate. ATP is bound by residues Asp55, 116 to 119 (EGAG), 176 to 177 (ND), and 205 to 207 (PWL). Mg(2+)-binding residues include Asp55 and Glu116.

Belongs to the dethiobiotin synthetase family. As to quaternary structure, homodimer. Mg(2+) is required as a cofactor.

The protein localises to the cytoplasm. The enzyme catalyses (7R,8S)-7,8-diammoniononanoate + CO2 + ATP = (4R,5S)-dethiobiotin + ADP + phosphate + 3 H(+). The protein operates within cofactor biosynthesis; biotin biosynthesis; biotin from 7,8-diaminononanoate: step 1/2. Catalyzes a mechanistically unusual reaction, the ATP-dependent insertion of CO2 between the N7 and N8 nitrogen atoms of 7,8-diaminopelargonic acid (DAPA, also called 7,8-diammoniononanoate) to form a ureido ring. This Pseudescherichia vulneris (Escherichia vulneris) protein is ATP-dependent dethiobiotin synthetase BioD.